A 513-amino-acid chain; its full sequence is 2,3-bisphosphoglycerate-independent phosphoglycerate mutase (513 aa).

Mn(2+) contacts are provided by D15 and S65. S65 (phosphoserine intermediate) is an active-site residue. Substrate-binding positions include H126, 156-157, R188, R194, 263-266, and K337; these read RD and RADR. Positions 402, 406, 443, 444, and 461 each coordinate Mn(2+).

It belongs to the BPG-independent phosphoglycerate mutase family. In terms of assembly, monomer. Requires Mn(2+) as cofactor.

It catalyses the reaction (2R)-2-phosphoglycerate = (2R)-3-phosphoglycerate. The protein operates within carbohydrate degradation; glycolysis; pyruvate from D-glyceraldehyde 3-phosphate: step 3/5. In terms of biological role, catalyzes the interconversion of 2-phosphoglycerate and 3-phosphoglycerate. The sequence is that of 2,3-bisphosphoglycerate-independent phosphoglycerate mutase from Moorella thermoacetica (strain ATCC 39073 / JCM 9320).